We begin with the raw amino-acid sequence, 249 residues long: Cilia- and flagella-associated protein 410 (249 aa).

LRR repeat units lie at residues 19-40 (NVRKLNCWGSQLTDISICREMP), 41-62 (SLEVITLSVNSVSTLEPVRSCR), and 63-84 (RLSELYLRRNRIPSLNELFYLK). Residues 97-137 (NPCCGTSPHLYRMTVLRNLPHLQKLDNQAVTEEELTRALME) form the LRRCT domain. Residues 146–203 (HREGAGNGCPKPPYALNSVSSATETSQHLLSYTEETEVQGQTTTDQSPSFSPRDTMRS) form a disordered region. The span at 162–175 (NSVSSATETSQHLL) shows a compositional bias: polar residues.

As to quaternary structure, found in a complex with CFAP410, NEK1 and SPATA7. Interacts with NEK1. As to expression, expressed in the retina.

The protein localises to the cell projection. It localises to the cilium. Its subcellular location is the cytoplasm. The protein resides in the cytoskeleton. It is found in the cilium basal body. The protein localises to the mitochondrion. It localises to the photoreceptor outer segment. Functionally, plays a role in cilia formation and/or maintenance. Plays a role in the regulation of cell morphology and cytoskeletal organization. Involved in DNA damage repair. This chain is Cilia- and flagella-associated protein 410, found in Mus musculus (Mouse).